The following is a 470-amino-acid chain: 1-aminocyclopropane-1-carboxylate synthase 5 (470 aa).

2 residues coordinate substrate: glutamate 47 and tyrosine 85. Residue lysine 272 is modified to N6-(pyridoxal phosphate)lysine. Residue serine 461 is modified to Phosphoserine.

It belongs to the class-I pyridoxal-phosphate-dependent aminotransferase family. As to quaternary structure, homodimer and heterodimer. In vivo, the relevance of heterodimerization with other ACS enzymes is however unsure. Interacts (via its C-terminal region) with FEI1, FEI2, ETO1, EOL1 and EOL2. Interacts with GRF3. It depends on pyridoxal 5'-phosphate as a cofactor. May be processed at its C-terminus. In terms of processing, ubiquitinated. The interaction with ETO1 (and possibly EOL1 and EOL2) mediate its proteasome-dependent degradation. Its stability and degradation plays a central role in ethylene biosynthesis. As to expression, expressed in roots and siliques.

It carries out the reaction S-adenosyl-L-methionine = 1-aminocyclopropane-1-carboxylate + S-methyl-5'-thioadenosine + H(+). It participates in alkene biosynthesis; ethylene biosynthesis via S-adenosyl-L-methionine; ethylene from S-adenosyl-L-methionine: step 1/2. 1-aminocyclopropane-1-carboxylate synthase (ACS) enzymes catalyze the conversion of S-adenosyl-L-methionine (SAM) into 1-aminocyclopropane-1-carboxylate (ACC), a direct precursor of ethylene. The protein is 1-aminocyclopropane-1-carboxylate synthase 5 (ACS5) of Arabidopsis thaliana (Mouse-ear cress).